The chain runs to 138 residues: MRLTQGTFSFLPDLTDEQINKQLTYIVSKGLSANVEYTDDPHPRNSYWELWGLPLFDVKDASAVMYEISSCRKAKPNYYVKVNAFDNTRGIESCVMSFIVNRPANEPGFLLQRQDFEGRTMKYSLHSYATEKPEGARY.

It belongs to the RuBisCO small chain family. In terms of assembly, heterohexadecamer of 8 large and 8 small subunits.

Its subcellular location is the plastid. It is found in the chloroplast. Its function is as follows. RuBisCO catalyzes two reactions: the carboxylation of D-ribulose 1,5-bisphosphate, the primary event in carbon dioxide fixation, as well as the oxidative fragmentation of the pentose substrate in the photorespiration process. Both reactions occur simultaneously and in competition at the same active site. Although the small subunit is not catalytic it is essential for maximal activity. The sequence is that of Ribulose bisphosphate carboxylase small subunit from Pyropia dentata (Red alga).